The primary structure comprises 505 residues: Calcium/calmodulin-dependent protein kinase kinase 1 (505 aa).

Residues 28 to 66 (LEEADEGPEPARNGVDPPPRARAASVIPGSASRPTPVRP) are disordered. Phosphoserine occurs at positions 67 and 74. Arg78 is modified (asymmetric dimethylarginine). The tract at residues 84–105 (LGAQVGPYSTGPASHISPRSWR) is disordered. Ser100 bears the Phosphoserine mark. Thr108 is subject to Phosphothreonine. The Protein kinase domain maps to 128-409 (YKLQSEIGKG…VSDIKLHPWV (282 aa)). ATP is bound by residues 134-142 (IGKGAYGVV) and Lys157. The segment at 167–189 (QYGFPRRPPPRGSQATQGGPAKQ) is RP domain. Asp275 serves as the catalytic Proton acceptor. The tract at residues 435 to 440 (KNSVRL) is autoinhibitory domain. The interval 438-463 (VRLIPSWTTVILVKSMLRKRSFGNPF) is calmodulin-binding. 3 positions are modified to phosphoserine: Ser458, Ser475, and Ser492. Residues 460 to 505 (GNPFEPQARREERSMSAPGSLLMKEGCGEGCKSPELPGVQEDEAAS) form a disordered region.

Belongs to the protein kinase superfamily. Ser/Thr protein kinase family. In terms of assembly, interacts with CAMK4 and calmodulin. Post-translationally, appears to be autophosphorylated in a Ca(2+)/calmodulin-dependent manner. Phosphorylated at multiple sites by PRCAKA/PKA. Phosphorylation of Ser-458 is blocked upon binding to Ca(2+)/calmodulin. In vitro, phosphorylated by CAMK1 and CAMK4. As to expression, widely expressed. Differentially expressed in various brain regions.

It is found in the cytoplasm. The protein localises to the nucleus. The catalysed reaction is L-seryl-[protein] + ATP = O-phospho-L-seryl-[protein] + ADP + H(+). It carries out the reaction L-threonyl-[protein] + ATP = O-phospho-L-threonyl-[protein] + ADP + H(+). Its activity is regulated as follows. Activated by Ca(2+)/calmodulin. Binding of calmodulin may relieve intrasteric autoinhibition. Partially inhibited upon phosphorylation by PRCAKA/PKA. May be regulated through phosphorylation by CAMK1 and CAMK4. Calcium/calmodulin-dependent protein kinase that belongs to a proposed calcium-triggered signaling cascade involved in a number of cellular processes. Phosphorylates CAMK1, CAMK1D, CAMK1G and CAMK4. Involved in regulating cell apoptosis. Promotes cell survival by phosphorylating AKT1/PKB that inhibits pro-apoptotic BAD/Bcl2-antagonist of cell death. In Mus musculus (Mouse), this protein is Calcium/calmodulin-dependent protein kinase kinase 1 (Camkk1).